Reading from the N-terminus, the 1703-residue chain is Mediator of RNA polymerase II transcription subunit 14 (1703 aa).

Over residues 755 to 766 the composition is skewed to polar residues; that stretch reads LSQTADLATSSA. The disordered stretch occupies residues 755–781; sequence LSQTADLATSSAGPLLRKDQKPRKRSA.

Belongs to the Mediator complex subunit 14 family. In terms of assembly, component of the Mediator complex. Interacts with CDKE-1, HDA19 and LUG. Interacts with PTAC12/HMR/PAP5 and PIF4. Expressed in roots, stems, developing embryos, young leaf primordia, shoot apical meristems, inflorescence meristems, tapetum in anthers, ovules and floral organ primordia, but not in mature organs.

The protein localises to the nucleus. Component of the Mediator complex, a coactivator involved in the regulated transcription of nearly all RNA polymerase II-dependent genes. Mediator functions as a bridge to convey information from gene-specific regulatory proteins to the basal RNA polymerase II transcription machinery. The Mediator complex, having a compact conformation in its free form, is recruited to promoters by direct interactions with regulatory proteins and serves for the assembly of a functional pre-initiation complex with RNA polymerase II and the general transcription factors. Binds to G-box (5'-CACGTG-3')-containing regions of target genes promoters (e.g. IAA29 and IAA19). Involved in defining the duration of cell proliferation. Element of a PIF4/HMR/MED14-dependent thermoresponsive process; required for thermomorphogenetic hypocotyl growth in response to daytime warm temperature elicitation by associating to the promoters of thermoresponsive growth-relevant genes (e.g. mainly involved in biosynthesis and signaling of the phytohormone auxin); this also process implies PIF4 and its transcriptional coactivator PTAC12/HMR/PAP5 to promote the expression of target genes. In Arabidopsis thaliana (Mouse-ear cress), this protein is Mediator of RNA polymerase II transcription subunit 14.